Consider the following 211-residue polypeptide: ATP phosphoribosyltransferase (211 aa).

Belongs to the ATP phosphoribosyltransferase family. Short subfamily. Heteromultimer composed of HisG and HisZ subunits.

The protein resides in the cytoplasm. It carries out the reaction 1-(5-phospho-beta-D-ribosyl)-ATP + diphosphate = 5-phospho-alpha-D-ribose 1-diphosphate + ATP. It participates in amino-acid biosynthesis; L-histidine biosynthesis; L-histidine from 5-phospho-alpha-D-ribose 1-diphosphate: step 1/9. Functionally, catalyzes the condensation of ATP and 5-phosphoribose 1-diphosphate to form N'-(5'-phosphoribosyl)-ATP (PR-ATP). Has a crucial role in the pathway because the rate of histidine biosynthesis seems to be controlled primarily by regulation of HisG enzymatic activity. The sequence is that of ATP phosphoribosyltransferase from Pseudomonas paraeruginosa (strain DSM 24068 / PA7) (Pseudomonas aeruginosa (strain PA7)).